Reading from the N-terminus, the 149-residue chain is UPF0336 protein Lxx02810 (149 aa).

The protein belongs to the UPF0336 family.

This chain is UPF0336 protein Lxx02810, found in Leifsonia xyli subsp. xyli (strain CTCB07).